The sequence spans 361 residues: D-amino-acid oxidase (361 aa).

Residues 1–22 form the signal peptide; it reads MSNTIVVVGAGVIGLTSALLLS. FAD contacts are provided by alanine 10, isoleucine 13, lysine 34, histidine 35, alanine 45, serine 46, glycine 50, and asparagine 52. N-linked (GlcNAc...) asparagine glycans are attached at residues asparagine 193 and asparagine 222. Residues tyrosine 242, tyrosine 258, and arginine 305 each contribute to the (R)-lactate site. Tyrosine 242, tyrosine 258, and arginine 305 together coordinate anthranilate. Positions 305, 332, 335, 336, and 337 each coordinate FAD. A Microbody targeting signal motif is present at residues 359–361; sequence SKL.

Belongs to the DAMOX/DASOX family. FAD serves as cofactor. The N-terminus is blocked.

Its subcellular location is the peroxisome matrix. The catalysed reaction is a D-alpha-amino acid + O2 + H2O = a 2-oxocarboxylate + H2O2 + NH4(+). In terms of biological role, catalyzes the oxidative deamination of D-amino acids with broad substrate specificity. Enables the organism to utilize D-amino acids as a source of nutrients. The polypeptide is D-amino-acid oxidase (Fusarium vanettenii (Neocosmospora pisi)).